We begin with the raw amino-acid sequence, 345 residues long: Putative RING-H2 finger protein ATL36 (345 aa).

Residues 1 to 31 (MNIFTRYHLPRVVSGVILPLFLFHLLPYVTC) form the signal peptide. A helical transmembrane segment spans residues 50–70 (SIIAIVVLAIFISLGMVSCCL). An RING-type; atypical zinc finger spans residues 123–165 (CAICLSEFEDQETLRWMPPCSHTFHANCIDVWLSSWSTCPVCR). At Ser-264 the chain carries Phosphoserine.

Belongs to the RING-type zinc finger family. ATL subfamily.

It localises to the membrane. It carries out the reaction S-ubiquitinyl-[E2 ubiquitin-conjugating enzyme]-L-cysteine + [acceptor protein]-L-lysine = [E2 ubiquitin-conjugating enzyme]-L-cysteine + N(6)-ubiquitinyl-[acceptor protein]-L-lysine.. Its pathway is protein modification; protein ubiquitination. The sequence is that of Putative RING-H2 finger protein ATL36 (ATL36) from Arabidopsis thaliana (Mouse-ear cress).